Consider the following 1332-residue polypeptide: DEMETER-like protein 2 (1332 aa).

Residues 1 to 23 show a composition bias toward basic and acidic residues; sequence MEVEGEVREKEARVKGRQPETEV. Disordered regions lie at residues 1-29, 137-242, and 280-317; these read MEVE…GLPQ, VSTS…TSEE, and VEGS…KKTD. Polar residues predominate over residues 137–153; the sequence is VSTSTQRTEPESPQITL. Low complexity predominate over residues 223-236; the sequence is SKAGIKKSSIAATA. The segment covering 301–312 has biased composition (basic residues); sequence PKGRRGQRRSNG. The segment at 497 to 595 is DEMETER; sequence KVQLDPETSR…AYMDLAAEFP (99 aa). Polar residues predominate over residues 739-753; it reads HQQDPESTIQTQDQQ. Residues 739–810 form a disordered region; the sequence is HQQDPESTIQ…GGRKRERTER (72 aa). Over residues 763–777 the composition is skewed to basic residues; sequence KNRKKPTTSKPKKKS. Over residues 787–810 the composition is skewed to basic and acidic residues; that stretch reads KSVDWDSLRKEAESGGRKRERTER. The [4Fe-4S] cluster site is built by Cys-970, Cys-977, Cys-980, and Cys-986.

This sequence belongs to the DNA glycosylase family. DEMETER subfamily. [4Fe-4S] cluster serves as cofactor.

Its subcellular location is the nucleus. Its function is as follows. Potential transcriptional activator that may act by nicking the target promoter. Catalyzes the release of 5-methylcytosine (5-meC) from DNA by a glycosylase/lyase mechanism. The protein is DEMETER-like protein 2 (DML2) of Arabidopsis thaliana (Mouse-ear cress).